A 423-amino-acid chain; its full sequence is Glucose-1-phosphate adenylyltransferase (423 aa).

Residues Y108, G173, 188–189 (EK), and S207 each bind alpha-D-glucose 1-phosphate.

Belongs to the bacterial/plant glucose-1-phosphate adenylyltransferase family. In terms of assembly, homotetramer.

It catalyses the reaction alpha-D-glucose 1-phosphate + ATP + H(+) = ADP-alpha-D-glucose + diphosphate. It functions in the pathway glycan biosynthesis; glycogen biosynthesis. Its function is as follows. Involved in the biosynthesis of ADP-glucose, a building block required for the elongation reactions to produce glycogen. Catalyzes the reaction between ATP and alpha-D-glucose 1-phosphate (G1P) to produce pyrophosphate and ADP-Glc. The sequence is that of Glucose-1-phosphate adenylyltransferase from Francisella tularensis subsp. novicida (strain U112).